The sequence spans 111 residues: Ribonuclease P protein component (111 aa).

This sequence belongs to the RnpA family. Consists of a catalytic RNA component (M1 or rnpB) and a protein subunit.

It carries out the reaction Endonucleolytic cleavage of RNA, removing 5'-extranucleotides from tRNA precursor.. Its function is as follows. RNaseP catalyzes the removal of the 5'-leader sequence from pre-tRNA to produce the mature 5'-terminus. It can also cleave other RNA substrates such as 4.5S RNA. The protein component plays an auxiliary but essential role in vivo by binding to the 5'-leader sequence and broadening the substrate specificity of the ribozyme. The polypeptide is Ribonuclease P protein component (Mycoplasmopsis pulmonis (strain UAB CTIP) (Mycoplasma pulmonis)).